The sequence spans 596 residues: Aspartate--tRNA(Asp/Asn) ligase (596 aa).

Glu-175 contacts L-aspartate. Residues 199–202 (QQYK) are aspartate. L-aspartate is bound by residues Arg-221 and His-454. Residue 221 to 223 (RDE) coordinates ATP. Glu-488 is an ATP binding site. Residue Arg-495 coordinates L-aspartate. 540-543 (GVDR) provides a ligand contact to ATP.

This sequence belongs to the class-II aminoacyl-tRNA synthetase family. Type 1 subfamily. In terms of assembly, homodimer.

Its subcellular location is the cytoplasm. The enzyme catalyses tRNA(Asx) + L-aspartate + ATP = L-aspartyl-tRNA(Asx) + AMP + diphosphate. Its function is as follows. Aspartyl-tRNA synthetase with relaxed tRNA specificity since it is able to aspartylate not only its cognate tRNA(Asp) but also tRNA(Asn). Reaction proceeds in two steps: L-aspartate is first activated by ATP to form Asp-AMP and then transferred to the acceptor end of tRNA(Asp/Asn). The chain is Aspartate--tRNA(Asp/Asn) ligase from Bartonella henselae (strain ATCC 49882 / DSM 28221 / CCUG 30454 / Houston 1) (Rochalimaea henselae).